Here is a 297-residue protein sequence, read N- to C-terminus: MCAQPVANTKEVRWQKVLYERQPFPDNYVDRRFLEELRKNIYARKYQYWAVVFESSVVIQQLCSVCVFVVIWWYMDEGLLAPQWLFGTGLASSLIGYVLFDFIDGGEGRKKSGRTRWADLKSALVFITFTYGFSPVLKTLTESVSTDTIYAMAVFMLLGHLIFFDYGANAAIVSSTLSLNMAIFASVCLASRLPRSLHAFIMVTFAIQIFALWPMLQKKLKACTPRSYVGVTLLFAFSALGGLLSISAVGAILFALLLISISCLCPFYLIRLQLFKENIHGPWDEAEIKEDLSRFLS.

The next 4 helical transmembrane spans lie at 67 to 87 (VFVV…WLFG), 88 to 108 (TGLA…GGEG), 153 to 173 (AVFM…AAIV), and 239 to 259 (ALGG…LLLI).

This sequence belongs to the PIGC family. Component of the glycosylphosphatidylinositol-N-acetylglucosaminyltransferase (GPI-GnT) complex composed at least by PIGA, PIGC, PIGH, PIGP, PIGQ, PIGY and DPM2. Interacts with PIGQ. Interacts with the heterodimer PIGA:PIGH.

The protein localises to the endoplasmic reticulum membrane. It participates in glycolipid biosynthesis; glycosylphosphatidylinositol-anchor biosynthesis. Functionally, part of the glycosylphosphatidylinositol-N-acetylglucosaminyltransferase (GPI-GnT) complex that catalyzes the transfer of N-acetylglucosamine from UDP-N-acetylglucosamine to phosphatidylinositol and participates in the first step of GPI biosynthesis. The polypeptide is Phosphatidylinositol N-acetylglucosaminyltransferase subunit C (Bos taurus (Bovine)).